A 1596-amino-acid chain; its full sequence is Transcription factor Zelda (1596 aa).

Disordered regions lie at residues 1-143 (MTSI…QQQQ), 209-273 (SGLG…GGAA), and 490-530 (TSPA…SVLP). Residues 13–24 (AAEALASSSATD) are compositionally biased toward low complexity. The segment covering 25 to 53 (SGGGGAGGGGGGGGGGSGGPGAGGTGGVG) has biased composition (gly residues). A compositionally biased stretch (polar residues) spans 60 to 72 (NATISAAADSSDN). 2 stretches are compositionally biased toward low complexity: residues 73-123 (QPGT…ITHQ) and 226-267 (SAPS…QTPG). Positions 501-518 (GGPGQEGAAGAAPGGGYR) are enriched in gly residues. The segment at 552-576 (YNCTACNKWFTSSGHLKRHYNTTLH) adopts a C2H2-type 1 zinc-finger fold. 4 disordered regions span residues 578–813 (NAVK…TTTA), 825–945 (EDSN…MGML), 1017–1074 (GEQH…MPLT), and 1252–1322 (QMQH…TTLP). The segment covering 610-634 (RGNAAAAAAAAAAAASASGQGQQQQ) has biased composition (low complexity). Over residues 635 to 653 (PPIPPPPANVPPPEPPRSP) the composition is skewed to pro residues. A compositionally biased stretch (gly residues) spans 656–668 (YGGGGGLGVGAMG). Residues 673–682 (SQYSASPSPT) show a composition bias toward polar residues. Composition is skewed to low complexity over residues 683–709 (QQQQ…GYGY) and 719–753 (NASP…HHNS). Polar residues predominate over residues 768 to 781 (PHNNNTTQMPSSQM). Over residues 796-813 (TTTRAPQITTTATTTTTA) the composition is skewed to low complexity. A compositionally biased stretch (basic residues) spans 830-840 (THTHTHTHPNH). Residues 849 to 858 (SSSSSSSMAT) show a composition bias toward low complexity. The span at 864–877 (QELRDQEQADDHLH) shows a compositional bias: basic and acidic residues. The segment covering 879 to 916 (HQQASQQYLLSARHYHSSTPNTLSSSNTNPSTPSSNSP) has biased composition (low complexity). Residues 904–1297 (SNTNPSTPSS…PLAKKRRGGN (394 aa)) are transactivation activation domain (TAD). Residues 921 to 932 (RQEQQGTDFSRT) show a composition bias toward polar residues. Pro residues predominate over residues 933-944 (TPPPQPLPPMGM). Basic and acidic residues predominate over residues 1019 to 1036 (QHQRQEADHHQQQRELHQ). Low complexity-rich tracts occupy residues 1037–1062 (LDQQ…SPTS) and 1252–1275 (QMQH…QQQQ). Polar residues-rich tracts occupy residues 1276 to 1286 (ILADQTQTMAQ) and 1309 to 1322 (SSVG…TTLP). The C2H2-type 2 zinc-finger motif lies at 1326–1349 (IKCLECDKEFTKNCYLTQHNKSFH). The C2H2-type 3; degenerate zinc finger occupies 1355–1378 (FRCQKCGKRFQSEDVYTTHLGRHR). 2 C2H2-type zinc fingers span residues 1384-1407 (HKCE…EAIH) and 1413-1435 (HMCD…LETH).

Zygotically expressed in the developing embryonic germ layers, nervous system, imaginal disk primordia and in larval wing and eye disks. As to expression, detected in the germline cells of the ovary, in unfertilized eggs and throughout early development. Later, it becomes mostly restricted to the nervous system and specific head regions. Also expressed in imaginal wing disks in third instar larvae.

It localises to the nucleus. The protein resides in the chromosome. In terms of biological role, transcription factor required for zygotic genome activation (ZGA), a critical event in early embryonic development during which the developmental control passes from maternally provided mRNAs to the expression of the zygotic genome after fertilization. Binds to regulatory DNA sequences containing a 5'-CAGGTAG-3' sequence motif, which are highly enriched among developmental enhancers. Within 1 hour into development, or by the embryo's 8th nuclear cycle, binds the majority of its motifs genome-wide. Zelda-binding promotes nucleosome depletion and chromatin accessibility, thereby facilitating the binding of patterning transcription factors, including the binding of the dorsoventral patterning transcription factors dorsal (dl) and twist (twi), and the anteroposterior patterning transcription factors bicoid (bcd) and caudal (cad). Promotes the activity of patterning transcription factors, such as bcd and dl, by lowering the concentration threshold required for transcriptional activation. Required both for the earliest (minor) and major waves of transcription during ZGA. Also involved in maternal mRNA clearance during the maternal-to-zygote transition by promoting expression of microRNAs (miRNAs), such as miR-1, miR-9a and miR-309, which mediate degradation of maternally-loaded RNAs. Also involved in post-blastoderm development: nvolved in nervous system development by maintaining neuroblasts in an undifferentiated state and equired for wing disk development. Its function is as follows. Constitutes the main isoform expressed throughout development. Transcription factor required for zygotic genome activation (ZGA). Acts as a dominant negative inhibitor of transcription factor activity of isoform A. The chain is Transcription factor Zelda from Drosophila melanogaster (Fruit fly).